We begin with the raw amino-acid sequence, 2527 residues long: Leucine-rich repeat serine/threonine-protein kinase 2 (2527 aa).

The required for RAB29-mediated activation stretch occupies residues Met1 to Arg969. A coiled-coil region spans residues Leu319–Phe348. Residues Ser910, Ser935, Ser955, and Ser973 each carry the phosphoserine modification. LRR repeat units lie at residues Tyr983 to Cys1004, His1012 to Thr1033, Ser1036 to Met1057, Cys1059 to Val1080, Thr1084 to Val1105, Lys1108 to Lys1129, Glu1130 to Glu1150, Glu1156 to Leu1171, Ser1174 to Pro1196, His1197 to Lys1218, Asn1221 to Ser1245, Arg1246 to Leu1267, and Asn1269 to Leu1291. At Ser1292 the chain carries Phosphoserine; by autocatalysis. In terms of domain architecture, Roc spans Lys1328–Phe1511. Residue Gly1341–Thr1348 coordinates GTP. Position 1444 is a phosphoserine (Ser1444). A COR domain is found at Pro1546 to Leu1740. The Protein kinase domain occupies Gln1879–Val2138. ATP is bound by residues Leu1885, Asp1887, Gly1888, Gly1891, Val1893, Ala1904, Lys1906, Met1947, Glu1948, Ala1950, Ser1954, and Arg1957. The active-site Proton acceptor is Asp1994. Residues His1998, Leu2001, Ala2016, and Asp2017 each contribute to the ATP site. Glu2098–Glu2121 provides a ligand contact to GTP. 7 WD repeats span residues Cys2139–Asp2183, Gly2188–Asn2228, Lys2233–Glu2276, Lys2281–Ser2327, Gln2333–Asp2377, Lys2402–Asp2438, and Arg2443–Asp2497. Asn2295–Thr2298 contributes to the GTP binding site.

This sequence belongs to the protein kinase superfamily. TKL Ser/Thr protein kinase family. Homodimer. Homotetramer; when activated by GTP-bound RAB29. Interacts with PRKN, PRDX3, and TPCN2. Interacts with VPS35. Interacts (via N-terminus) with RAB29; this interaction is direct and stimulates kinase activity. Interacts (via ROC domain) with SEC16A. Interacts with APP; interaction promotes phosphorylation of 'Thr-743' of APP. Interacts with MAPT. Interacts with RAB8A, RAB10, and RAB12. Interacts (via N-terminus) with RAB32. Interacts with YWHAG; this interaction is dependent on phosphorylation of Ser-910 and either Ser-935 or Ser-1444. Interacts with SFN; this interaction is dependent on phosphorylation of Ser-910 and/or Ser-935. Mg(2+) serves as cofactor. Post-translationally, autophosphorylated at Ser-1292; autophosphorylation is stimulated by RAB29. Phosphorylation of Ser-910 and either Ser-935 or Ser-1444 facilitates interaction with YWHAG. Phosphorylation of Ser-910 and/or Ser-935 facilitates interaction with SFN. In terms of processing, ubiquitinated by TRIM1; undergoes 'Lys-48'-linked polyubiquitination leading to proteasomal degradation. In terms of tissue distribution, expressed in pyramidal neurons in all cortical laminae of the visual cortex, in neurons of the substantia nigra pars compacta and caudate putamen (at protein level). Expressed in neutrophils (at protein level). Expressed in the brain. Expressed throughout the adult brain, but at a lower level than in heart and liver. Also expressed in placenta, lung, skeletal muscle, kidney and pancreas. In the brain, expressed in the cerebellum, cerebral cortex, medulla, spinal cord occipital pole, frontal lobe, temporal lobe and putamen. Expression is particularly high in brain dopaminoceptive areas.

It is found in the cytoplasmic vesicle. It localises to the perikaryon. Its subcellular location is the golgi apparatus membrane. The protein resides in the cell projection. The protein localises to the axon. It is found in the dendrite. It localises to the endoplasmic reticulum membrane. Its subcellular location is the secretory vesicle. The protein resides in the synaptic vesicle membrane. The protein localises to the endosome. It is found in the lysosome. It localises to the mitochondrion outer membrane. Its subcellular location is the cytoplasm. The protein resides in the cytoskeleton. The protein localises to the phagosome. The catalysed reaction is L-threonyl-[protein] + ATP = O-phospho-L-threonyl-[protein] + ADP + H(+). The enzyme catalyses L-seryl-[protein] + ATP = O-phospho-L-seryl-[protein] + ADP + H(+). It carries out the reaction GTP + H2O = GDP + phosphate + H(+). With respect to regulation, kinase activity is regulated by the GTPase activity of the ROC domain. GTP-bound LRRK2 kinase activity is stimulated by RAB29. Phosphorylation of RAB10 'Thr-73' is stimulated by RAB29 and RAB32. Inhibited by small molecule inhibitor MLi-2. Serine/threonine-protein kinase which phosphorylates a broad range of proteins involved in multiple processes such as neuronal plasticity, innate immunity, autophagy, and vesicle trafficking. Is a key regulator of RAB GTPases by regulating the GTP/GDP exchange and interaction partners of RABs through phosphorylation. Phosphorylates RAB3A, RAB3B, RAB3C, RAB3D, RAB5A, RAB5B, RAB5C, RAB8A, RAB8B, RAB10, RAB12, RAB29, RAB35, and RAB43. Regulates the RAB3IP-catalyzed GDP/GTP exchange for RAB8A through the phosphorylation of 'Thr-72' on RAB8A. Inhibits the interaction between RAB8A and GDI1 and/or GDI2 by phosphorylating 'Thr-72' on RAB8A. Regulates primary ciliogenesis through phosphorylation of RAB8A and RAB10, which promotes SHH signaling in the brain. Together with RAB29, plays a role in the retrograde trafficking pathway for recycling proteins, such as mannose-6-phosphate receptor (M6PR), between lysosomes and the Golgi apparatus in a retromer-dependent manner. Regulates neuronal process morphology in the intact central nervous system (CNS). Plays a role in synaptic vesicle trafficking. Plays an important role in recruiting SEC16A to endoplasmic reticulum exit sites (ERES) and in regulating ER to Golgi vesicle-mediated transport and ERES organization. Positively regulates autophagy through a calcium-dependent activation of the CaMKK/AMPK signaling pathway. The process involves activation of nicotinic acid adenine dinucleotide phosphate (NAADP) receptors, increase in lysosomal pH, and calcium release from lysosomes. Phosphorylates PRDX3. By phosphorylating APP on 'Thr-743', which promotes the production and the nuclear translocation of the APP intracellular domain (AICD), regulates dopaminergic neuron apoptosis. Acts as a positive regulator of innate immunity by mediating phosphorylation of RIPK2 downstream of NOD1 and NOD2, thereby enhancing RIPK2 activation. Independent of its kinase activity, inhibits the proteasomal degradation of MAPT, thus promoting MAPT oligomerization and secretion. In addition, has GTPase activity via its Roc domain which regulates LRRK2 kinase activity. Recruited by RAB29/RAB7L1 to overloaded lysosomes where it phosphorylates and stabilizes RAB8A and RAB10 which promote lysosomal content release and suppress lysosomal enlargement through the EHBP1 and EHBP1L1 effector proteins. This is Leucine-rich repeat serine/threonine-protein kinase 2 (LRRK2) from Homo sapiens (Human).